The primary structure comprises 179 residues: Inner membrane-spanning protein YciB (179 aa).

5 consecutive transmembrane segments (helical) span residues 22-42, 50-70, 76-96, 121-141, and 149-169; these read IYAATAALIVATAIVLIYSWV, MALITFVLVVVFGGLTLFFHN, WKVTVIYALFAGALLVSQWVM, LAWAVFFILCGLANIYIAFWL, and FKVFGLTALTLIFTLLSGVYI.

The protein belongs to the YciB family.

The protein localises to the cell inner membrane. Its function is as follows. Plays a role in cell envelope biogenesis, maintenance of cell envelope integrity and membrane homeostasis. The sequence is that of Inner membrane-spanning protein YciB from Escherichia fergusonii (strain ATCC 35469 / DSM 13698 / CCUG 18766 / IAM 14443 / JCM 21226 / LMG 7866 / NBRC 102419 / NCTC 12128 / CDC 0568-73).